The sequence spans 91 residues: Cell division topological specificity factor (91 aa).

It belongs to the MinE family.

Functionally, prevents the cell division inhibition by proteins MinC and MinD at internal division sites while permitting inhibition at polar sites. This ensures cell division at the proper site by restricting the formation of a division septum at the midpoint of the long axis of the cell. The sequence is that of Cell division topological specificity factor from Gloeobacter violaceus (strain ATCC 29082 / PCC 7421).